The following is a 622-amino-acid chain: DNA mismatch repair protein MutL (622 aa).

The protein belongs to the DNA mismatch repair MutL/HexB family.

In terms of biological role, this protein is involved in the repair of mismatches in DNA. It is required for dam-dependent methyl-directed DNA mismatch repair. May act as a 'molecular matchmaker', a protein that promotes the formation of a stable complex between two or more DNA-binding proteins in an ATP-dependent manner without itself being part of a final effector complex. In Phenylobacterium zucineum (strain HLK1), this protein is DNA mismatch repair protein MutL.